Consider the following 476-residue polypeptide: Glycogen synthase (476 aa).

Lys15 is an ADP-alpha-D-glucose binding site.

Belongs to the glycosyltransferase 1 family. Bacterial/plant glycogen synthase subfamily.

The catalysed reaction is [(1-&gt;4)-alpha-D-glucosyl](n) + ADP-alpha-D-glucose = [(1-&gt;4)-alpha-D-glucosyl](n+1) + ADP + H(+). The protein operates within glycan biosynthesis; glycogen biosynthesis. In terms of biological role, synthesizes alpha-1,4-glucan chains using ADP-glucose. This Streptococcus mutans serotype c (strain ATCC 700610 / UA159) protein is Glycogen synthase.